A 1174-amino-acid polypeptide reads, in one-letter code: MNATDAESRKPENKPSSESSSSGSTSGSSDGEVSSKTYFKNNKSKVLSGQREVVLEVVRDLSYTICKEAEEKLVERFPRKDGSNEMLPKEDSINTNHNYTTDSNEHPVELTTKTEECKNTEKTKKKSFVRALSKDKQLSAYRSRSRSTRLSYSGHISRTHSVEKSLSRYKKSVLRNRRTSFGHGRDSSTTKRSVSRDKDNRLRRRIGSSRSHTRSHSRFRRSEKKLPSRSPRRIRSQERRHERRRSMSSDYERIALRRSEPIKRRDKDEFFKNNKKVSGDIKKGKGNDNGTVAELEAKITERQRKSLDILTSRTGGACLTPDKLRMIQAEITDKSSAAYQSIAREALKKYIHGYINKVNVDSVAVITRKLLKDNIVRGRGVLCHSIIQAQATSPTFTHVYAAMVAIINSKFPNIGELLLKRLVIQFKRAFGCNDKTVCLTSSHFIAHLVNQRVAHEILALEILTLLIESPTDDNVEVAITFLKECGMKLTEVSSDRVGGIFELLKNILHQGKLDKRVQYMIKVLFQVRRDGFKDHQSIIESLELVEEYAQFTHLLLLEDVTYPKDILNEFKFDDQYETNEEKYKALSKDILGSHASDSDGSFGSGSNSETALSDCDKVKNEVNDKYTSGDIIDETKPNLIALRRTIYLTLNSCLDYEECAQKLMKTQLKTCQQNEFCQILLDCCAEQRTYEKFYGLLTHRICKMNKSFIEPFKEIFKDICQTTHCLDTNRLRNISKFFAHLLFTDAISWDVLDCIKLTEDEAITSRCIFIKSFFQELVEYMGLYHFNKKLKTEVLAGTLAGLFPKDNPRNIRFSINFFTSIGLGGITNELCQLLKIAPKSAPSSSSSSSLSSELSAPSDDDSSSDSENKKKHKGKNKKMTKKKNPSKKKEKTKKFVGKNKIAAKNKTIKRRTDKDNSSSKDNFLKSESSSNESISLDSLSSELFAPSSYSSSESSNDSESKEKHKGKNKKMTKKKNPSNKKEKTKKKLSKNKKAPNKNTKKRMTEKDISSSESSISESKSLNCSASNQNENEKRKKRVTSKSRTKRVKMFKQCQWVDADNQRDIKRKKRAEYRYEPLVYRKRNEECLKKGAPNCXKDNYGNRQNHEISQRHDSEIKRRREERKKRHHEKNHSREYKRSKLGLCQREYFLYMCCQFYYPCTFQCLCQNCHFTFYS.

Residues 1–15 (MNATDAESRKPENKP) show a composition bias toward basic and acidic residues. Disordered stretches follow at residues 1-51 (MNAT…SGQR), 80-109 (KDGSNEMLPKEDSINTNHNYTTDSNEHPVE), and 136-259 (KQLS…LRRS). Over residues 16–35 (SSESSSSGSTSGSSDGEVSS) the composition is skewed to low complexity. The segment covering 36–47 (KTYFKNNKSKVL) has biased composition (polar residues). The segment covering 80 to 92 (KDGSNEMLPKEDS) has biased composition (basic and acidic residues). The segment covering 93–102 (INTNHNYTTD) has biased composition (polar residues). Low complexity predominate over residues 138-153 (LSAYRSRSRSTRLSYS). Residues 167 to 180 (SRYKKSVLRNRRTS) are compositionally biased toward basic residues. Positions 183 to 200 (HGRDSSTTKRSVSRDKDN) are enriched in basic and acidic residues. The segment covering 201–223 (RLRRRIGSSRSHTRSHSRFRRSE) has biased composition (basic residues). The span at 235–259 (RSQERRHERRRSMSSDYERIALRRS) shows a compositional bias: basic and acidic residues. The MIF4G domain maps to 348–531 (KKYIHGYINK…KVLFQVRRDG (184 aa)). The MI domain occupies 641–757 (ALRRTIYLTL…SWDVLDCIKL (117 aa)). The span at 840–857 (SAPSSSSSSSLSSELSAP) shows a compositional bias: low complexity. Disordered stretches follow at residues 840 to 1045 (SAPS…SRTK) and 1096 to 1133 (KDNYGNRQNHEISQRHDSEIKRRREERKKRHHEKNHSR). Residues 869–909 (KKKHKGKNKKMTKKKNPSKKKEKTKKFVGKNKIAAKNKTIK) are compositionally biased toward basic residues. Residues 910 to 924 (RRTDKDNSSSKDNFL) are compositionally biased toward basic and acidic residues. The span at 926–957 (SESSSNESISLDSLSSELFAPSSYSSSESSND) shows a compositional bias: low complexity. A compositionally biased stretch (basic residues) spans 963–1001 (KHKGKNKKMTKKKNPSNKKEKTKKKLSKNKKAPNKNTKK). The segment covering 1010–1020 (SSESSISESKS) has biased composition (low complexity). The segment covering 1034 to 1045 (RKKRVTSKSRTK) has biased composition (basic residues). Positions 1103–1118 (QNHEISQRHDSEIKRR) are enriched in basic and acidic residues. The segment covering 1119–1130 (REERKKRHHEKN) has biased composition (basic residues).

The protein belongs to the CWC22 family. Component of the spliceosome C complex.

The protein resides in the nucleus speckle. Functionally, male determiner protein (M-factor) that controls male somatic sexual differentiation. Acts as a dominant factor that regulates the mRNA splicing of transformer (tra) and doublesex (dsx) transcripts and promotes expression of male splice forms of tra and dsx. Probably acts as a component of the spliceosome C complex required for mRNA splicing factor and exon-junction complex (EJC) assembly. Hinders eIF4AIII from non-specifically binding RNA and escorts it to the splicing machinery to promote EJC assembly on mature mRNAs. This chain is Male determiner protein Mdmd(III), found in Musca domestica (House fly).